Here is an 833-residue protein sequence, read N- to C-terminus: DNA ligase (833 aa).

Residues 35–39 (DVEYD), 84–85 (SL), and Glu115 contribute to the NAD(+) site. Lys117 acts as the N6-AMP-lysine intermediate in catalysis. Residues Arg138, Glu175, Lys292, and Lys316 each contribute to the NAD(+) site. Zn(2+) contacts are provided by Cys410, Cys413, Cys428, and Cys434. The region spanning 750 to 833 (VQAGPLDGQT…AFLSEHGQAV (84 aa)) is the BRCT domain.

Belongs to the NAD-dependent DNA ligase family. LigA subfamily. Mg(2+) is required as a cofactor. The cofactor is Mn(2+).

The catalysed reaction is NAD(+) + (deoxyribonucleotide)n-3'-hydroxyl + 5'-phospho-(deoxyribonucleotide)m = (deoxyribonucleotide)n+m + AMP + beta-nicotinamide D-nucleotide.. In terms of biological role, DNA ligase that catalyzes the formation of phosphodiester linkages between 5'-phosphoryl and 3'-hydroxyl groups in double-stranded DNA using NAD as a coenzyme and as the energy source for the reaction. It is essential for DNA replication and repair of damaged DNA. This Xanthomonas campestris pv. campestris (strain 8004) protein is DNA ligase.